Here is a 78-residue protein sequence, read N- to C-terminus: Defensin-like protein 308 (78 aa).

The first 19 residues, 1–19 (MKTSAFFIAVLLILSCSSS), serve as a signal peptide directing secretion. 3 cysteine pairs are disulfide-bonded: Cys31/Cys50, Cys37/Cys55, and Cys41/Cys57.

The protein belongs to the DEFL family.

The protein localises to the secreted. The polypeptide is Defensin-like protein 308 (Arabidopsis thaliana (Mouse-ear cress)).